A 360-amino-acid polypeptide reads, in one-letter code: 3-isopropylmalate dehydrogenase (360 aa).

NAD(+) is bound at residue 76–89; that stretch reads GPKWDKLDMAIRPE. Residues Arg96, Arg106, Arg134, and Asp224 each contribute to the substrate site. Mg(2+) contacts are provided by Asp224, Asp248, and Asp252. An NAD(+)-binding site is contributed by 282–294; sequence GSAPDIAGQNMAN.

It belongs to the isocitrate and isopropylmalate dehydrogenases family. LeuB type 1 subfamily. Homodimer. It depends on Mg(2+) as a cofactor. Mn(2+) is required as a cofactor.

It localises to the cytoplasm. It catalyses the reaction (2R,3S)-3-isopropylmalate + NAD(+) = 4-methyl-2-oxopentanoate + CO2 + NADH. It participates in amino-acid biosynthesis; L-leucine biosynthesis; L-leucine from 3-methyl-2-oxobutanoate: step 3/4. Catalyzes the oxidation of 3-carboxy-2-hydroxy-4-methylpentanoate (3-isopropylmalate) to 3-carboxy-4-methyl-2-oxopentanoate. The product decarboxylates to 4-methyl-2 oxopentanoate. The polypeptide is 3-isopropylmalate dehydrogenase (Hahella chejuensis (strain KCTC 2396)).